Reading from the N-terminus, the 264-residue chain is Tryptophan synthase alpha chain (264 aa).

Residues Glu-49 and Asp-60 each act as proton acceptor in the active site.

The protein belongs to the TrpA family. In terms of assembly, tetramer of two alpha and two beta chains.

It catalyses the reaction (1S,2R)-1-C-(indol-3-yl)glycerol 3-phosphate + L-serine = D-glyceraldehyde 3-phosphate + L-tryptophan + H2O. It functions in the pathway amino-acid biosynthesis; L-tryptophan biosynthesis; L-tryptophan from chorismate: step 5/5. In terms of biological role, the alpha subunit is responsible for the aldol cleavage of indoleglycerol phosphate to indole and glyceraldehyde 3-phosphate. The protein is Tryptophan synthase alpha chain of Geobacter sulfurreducens (strain ATCC 51573 / DSM 12127 / PCA).